Here is a 201-residue protein sequence, read N- to C-terminus: Recombination protein RecR (201 aa).

The segment at 57-72 (CADCRTFTEQEVCNIC) adopts a C4-type zinc-finger fold. The region spanning 81–176 (GQICVVESPA…EASRIAHGVP (96 aa)) is the Toprim domain.

The protein belongs to the RecR family.

In terms of biological role, may play a role in DNA repair. It seems to be involved in an RecBC-independent recombinational process of DNA repair. It may act with RecF and RecO. This is Recombination protein RecR from Shigella boydii serotype 4 (strain Sb227).